The chain runs to 340 residues: Phosphoribosylformylglycinamidine cyclo-ligase (340 aa).

This sequence belongs to the AIR synthase family.

The protein resides in the cytoplasm. The catalysed reaction is 2-formamido-N(1)-(5-O-phospho-beta-D-ribosyl)acetamidine + ATP = 5-amino-1-(5-phospho-beta-D-ribosyl)imidazole + ADP + phosphate + H(+). It functions in the pathway purine metabolism; IMP biosynthesis via de novo pathway; 5-amino-1-(5-phospho-D-ribosyl)imidazole from N(2)-formyl-N(1)-(5-phospho-D-ribosyl)glycinamide: step 2/2. This Lactococcus lactis subsp. cremoris (strain MG1363) protein is Phosphoribosylformylglycinamidine cyclo-ligase.